Here is a 1079-residue protein sequence, read N- to C-terminus: Electrogenic sodium bicarbonate cotransporter 1 (1079 aa).

Residues 1-62 (MEDEAVLDRG…EKKEKERISE (62 aa)) are required for interaction with AHCYL1. At 1-466 (MEDEAVLDRG…FASDFYDALN (466 aa)) the chain is on the cytoplasmic side. Glutamate 21 is modified (phosphoserine). At tyrosine 30 the chain carries Phosphotyrosine. Residues 39–52 (YRRRRRHKRKAGHK) show a composition bias toward basic residues. A disordered region spans residues 39–78 (YRRRRRHKRKAGHKEKKEKERISENYSDKSDVENADESSS). A compositionally biased stretch (basic and acidic residues) spans 53 to 70 (EKKEKERISENYSDKSDV). Residues serine 61, serine 65, serine 68, serine 223, serine 232, serine 233, and serine 245 each carry the phosphoserine modification. A disordered region spans residues 235 to 266 (SRMFSNPDNGSPAMTHRNLTSSSLNDISDKPE). Phosphothreonine is present on residues threonine 249 and threonine 254. The span at 251-260 (RNLTSSSLND) shows a compositional bias: polar residues. Phosphoserine is present on residues serine 256, serine 257, and serine 262. Residues 467–491 (IQALSAILFIYLATVTNAITFGGLL) form a helical membrane-spanning segment. Residues 492-501 (GDATDNMQGV) are Extracellular-facing. The helical transmembrane segment at 502–520 (LESFLGTAVSGAIFCLFAG) threads the bilayer. Glutamine 521 is a topological domain (cytoplasmic). Residues 522 to 542 (PLTILSSTGPVLVFERLLFNF) form a discontinuously helical membrane-spanning segment. The Extracellular portion of the chain corresponds to 543-550 (SKDHNFDY). Residues 551–571 (LEFRLWIGLWSAFMCLVLVAT) form a helical membrane-spanning segment. Over 572–585 (DASFLVQYFTRFTE) the chain is Cytoplasmic. A helical membrane pass occupies residues 586–609 (EGFSSLISFIFIYDAFKKMIKLAD). Over 610–692 (YYPINSDFKV…GNNCDFVPDI (83 aa)) the chain is Extracellular. The helical transmembrane segment at 693-710 (TLMSFILFLGTYTSSMAM) threads the bilayer. Over 711–725 (KKFKTSRYFPTTARK) the chain is Cytoplasmic. The helical transmembrane segment at 726-745 (LISDFAIILSILIFCVIDAL) threads the bilayer. Residues 746–779 (VGVDTPKLIVPSEFKPTSPNRGWFVPPFGGNPWW) are Extracellular-facing. Residues 748 to 779 (VDTPKLIVPSEFKPTSPNRGWFVPPFGGNPWW) form an interaction with CA4 region. A helical transmembrane segment spans residues 780-807 (VCLAAAIPALLVTILIFMDQQITAVIVN). The Cytoplasmic portion of the chain corresponds to 808–819 (RKEHKLKKGAGY). A helical transmembrane segment spans residues 820–836 (HLDLFWVAILMVVCSFM). A topological domain (extracellular) is located at residue alanine 837. The discontinuously helical transmembrane segment at 838–855 (LPWYVAATVISIAHIDSL) threads the bilayer. The Cytoplasmic portion of the chain corresponds to 856-877 (KMETETSAPGEQPKFLGVREQR). Residues 878-894 (VTGTLVFILTGLSVFMA) traverse the membrane as a helical segment. Over 895–901 (PILKFIP) the chain is Extracellular. The chain crosses the membrane as a helical span at residues 902–918 (MPVLYGVFLYMGVASLN). Residues 919-960 (GVQFMDRLKLLLMPLKHQPDFIYLRHVPLRRVHLFTFLQVLC) are Cytoplasmic-facing. Positions 961–986 (LALLWILKSTVAAIIFPVMILALVAV) form an intramembrane region, discontinuously helical. The Cytoplasmic portion of the chain corresponds to 987 to 1079 (RKGMDYLFSQ…STFLERHTSC (93 aa)). Positions 1002-1004 (LDD) are CA2-binding. The tract at residues 1012 to 1079 (KKKEDEKKKK…STFLERHTSC (68 aa)) is disordered. Residues serine 1026 and serine 1029 each carry the phosphoserine modification. Residues 1030–1033 (DNDD) form a CA2-binding region. A phosphoserine mark is found at serine 1034 and serine 1044. The interval 1057–1059 (FLS) is required for basolateral targeting. A compositionally biased stretch (basic and acidic residues) spans 1062-1079 (KPLDRERSSTFLERHTSC). The residue at position 1069 (serine 1069) is a Phosphoserine.

Belongs to the anion exchanger (TC 2.A.31) family. As to quaternary structure, homodimer. Interacts with CA2/carbonic anhydrase 2 and CA4/carbonic anhydrase 4 which may regulate transporter activity. Isoform 1 but not isoform 2 interacts with AHCYL1 (via PEST domain when phosphorylated); the interaction increases SLC4A4 isoform 1 activity. Interacts with AHCYL2. In terms of processing, phosphorylation of Ser-1026 by PKA increases the binding of CA2 and changes the Na(+):HCO3(-) stoichiometry of the transporter from 3:1 to 2:1. Phosphorylated in presence of STK39 and dephosphorylated in presence of PP1 phosphatase; phosphorylation seems to inhibit SLC4A4 activity. Post-translationally, N-glycosylated. May not be necessary for the transporter basic functions. In terms of tissue distribution, isoform 1 is specifically expressed in pancreatic ducts and acini. Also expressed in parotid acinar cells and in the colonic crypts.

The protein localises to the basolateral cell membrane. Its subcellular location is the cell membrane. The enzyme catalyses 2 hydrogencarbonate(out) + Na(+)(out) = 2 hydrogencarbonate(in) + Na(+)(in). The catalysed reaction is 3 hydrogencarbonate(out) + Na(+)(out) = 3 hydrogencarbonate(in) + Na(+)(in). Activated by cyclic AMP. Functionally, electrogenic sodium/bicarbonate cotransporter with a Na(+):HCO3(-) stoichiometry varying from 1:2 to 1:3. May regulate bicarbonate influx/efflux at the basolateral membrane of cells and regulate intracellular pH. This Mus musculus (Mouse) protein is Electrogenic sodium bicarbonate cotransporter 1 (Slc4a4).